The following is a 535-amino-acid chain: CTP synthase (535 aa).

The segment at 1-267 (MTKYIFVTGG…DSLVCSHLKL (267 aa)) is amidoligase domain. A CTP-binding site is contributed by Ser-13. Ser-13 provides a ligand contact to UTP. Position 14-19 (14-19 (SLGKGI)) interacts with ATP. Residue Tyr-54 coordinates L-glutamine. Position 71 (Asp-71) interacts with ATP. The Mg(2+) site is built by Asp-71 and Glu-141. CTP contacts are provided by residues 148–150 (DIE), 188–193 (KTKPTQ), and Lys-224. UTP is bound by residues 188-193 (KTKPTQ) and Lys-224. One can recognise a Glutamine amidotransferase type-1 domain in the interval 292–534 (TIALVGKYVE…VHASLKTSEK (243 aa)). Position 354 (Gly-354) interacts with L-glutamine. Catalysis depends on Cys-381, which acts as the Nucleophile; for glutamine hydrolysis. L-glutamine-binding positions include 382-385 (LGMQ), Glu-405, and Arg-462. Catalysis depends on residues His-507 and Glu-509.

The protein belongs to the CTP synthase family. In terms of assembly, homotetramer.

It carries out the reaction UTP + L-glutamine + ATP + H2O = CTP + L-glutamate + ADP + phosphate + 2 H(+). The enzyme catalyses L-glutamine + H2O = L-glutamate + NH4(+). It catalyses the reaction UTP + NH4(+) + ATP = CTP + ADP + phosphate + 2 H(+). Its pathway is pyrimidine metabolism; CTP biosynthesis via de novo pathway; CTP from UDP: step 2/2. Allosterically activated by GTP, when glutamine is the substrate; GTP has no effect on the reaction when ammonia is the substrate. The allosteric effector GTP functions by stabilizing the protein conformation that binds the tetrahedral intermediate(s) formed during glutamine hydrolysis. Inhibited by the product CTP, via allosteric rather than competitive inhibition. Catalyzes the ATP-dependent amination of UTP to CTP with either L-glutamine or ammonia as the source of nitrogen. Regulates intracellular CTP levels through interactions with the four ribonucleotide triphosphates. The protein is CTP synthase of Bacillus licheniformis (strain ATCC 14580 / DSM 13 / JCM 2505 / CCUG 7422 / NBRC 12200 / NCIMB 9375 / NCTC 10341 / NRRL NRS-1264 / Gibson 46).